A 1442-amino-acid polypeptide reads, in one-letter code: ABC transporter G family member 11 (1442 aa).

Positions 125–373 (LFTPSFWTKK…FMSLGFDCEP (249 aa)) constitute an ABC transporter 1 domain. The ABC transmembrane type-2 1 domain occupies 478-718 (LNDKFGMYSK…EQGSLYFKGD (241 aa)). The next 6 membrane-spanning stretches (helical) occupy residues 482–502 (FGMY…ASLF), 518–538 (AILS…AMTF), 567–587 (IPFT…MFGL), 592–612 (GKFF…TALF), 627–647 (NISN…IPIP), and 737–757 (IIVY…MEYI). An ABC transporter 2 domain is found at 808 to 1052 (FTWQNIRYTV…LTSYFERHGV (245 aa)). 844-851 (GSSGAGKT) lines the ATP pocket. An ABC transmembrane type-2 2 domain is found at 1144 to 1369 (YYTYGSFVQA…YNTCQNYTSA (226 aa)). 6 helical membrane passes run 1147 to 1167 (YGSF…FWNL), 1181 to 1201 (IFEA…QLII), 1220 to 1240 (FAIS…TIFF), 1259 to 1279 (FYFW…GQAV), 1286 to 1306 (MFFA…FCGV), and 1416 to 1436 (VGII…FVYL).

The protein belongs to the ABC transporter superfamily. ABCG family. PDR (TC 3.A.1.205) subfamily.

Its subcellular location is the membrane. The chain is ABC transporter G family member 11 (abcG11) from Dictyostelium discoideum (Social amoeba).